A 147-amino-acid chain; its full sequence is Ribosome maturation factor RimP (147 aa).

This sequence belongs to the RimP family.

It is found in the cytoplasm. Its function is as follows. Required for maturation of 30S ribosomal subunits. This is Ribosome maturation factor RimP from Legionella pneumophila (strain Lens).